A 1342-amino-acid chain; its full sequence is DNA-directed RNA polymerase subunit beta (1342 aa).

This sequence belongs to the RNA polymerase beta chain family. As to quaternary structure, the RNAP catalytic core consists of 2 alpha, 1 beta, 1 beta' and 1 omega subunit. When a sigma factor is associated with the core the holoenzyme is formed, which can initiate transcription.

It carries out the reaction RNA(n) + a ribonucleoside 5'-triphosphate = RNA(n+1) + diphosphate. In terms of biological role, DNA-dependent RNA polymerase catalyzes the transcription of DNA into RNA using the four ribonucleoside triphosphates as substrates. In Proteus mirabilis (strain HI4320), this protein is DNA-directed RNA polymerase subunit beta.